Consider the following 483-residue polypeptide: tRNA sulfurtransferase (483 aa).

The 105-residue stretch at 62–166 (PEICDALTRI…QDKLILVKAR (105 aa)) folds into the THUMP domain. Residues 184–185 (LI), K266, G288, and Q297 each bind ATP. A disulfide bond links C345 and C457. The Rhodanese domain maps to 405–483 (LADTDVLLDI…GYTNVKVYRP (79 aa)). Residue C457 is the Cysteine persulfide intermediate of the active site.

Belongs to the ThiI family.

The protein resides in the cytoplasm. The enzyme catalyses [ThiI sulfur-carrier protein]-S-sulfanyl-L-cysteine + a uridine in tRNA + 2 reduced [2Fe-2S]-[ferredoxin] + ATP + H(+) = [ThiI sulfur-carrier protein]-L-cysteine + a 4-thiouridine in tRNA + 2 oxidized [2Fe-2S]-[ferredoxin] + AMP + diphosphate. It catalyses the reaction [ThiS sulfur-carrier protein]-C-terminal Gly-Gly-AMP + S-sulfanyl-L-cysteinyl-[cysteine desulfurase] + AH2 = [ThiS sulfur-carrier protein]-C-terminal-Gly-aminoethanethioate + L-cysteinyl-[cysteine desulfurase] + A + AMP + 2 H(+). The protein operates within cofactor biosynthesis; thiamine diphosphate biosynthesis. Functionally, catalyzes the ATP-dependent transfer of a sulfur to tRNA to produce 4-thiouridine in position 8 of tRNAs, which functions as a near-UV photosensor. Also catalyzes the transfer of sulfur to the sulfur carrier protein ThiS, forming ThiS-thiocarboxylate. This is a step in the synthesis of thiazole, in the thiamine biosynthesis pathway. The sulfur is donated as persulfide by IscS. In Yersinia pseudotuberculosis serotype IB (strain PB1/+), this protein is tRNA sulfurtransferase.